A 268-amino-acid polypeptide reads, in one-letter code: Undecaprenyl-diphosphatase (268 aa).

7 helical membrane passes run 42–62 (VPGK…ICVL), 86–106 (AIFV…DFIL), 108–128 (VLFT…AIVV), 158–178 (IALV…LLVG), 184–204 (AAEF…VVSL), 218–238 (LIAA…KWLV), and 246–266 (FTVF…YFSL).

The protein belongs to the UppP family.

The protein resides in the cell inner membrane. The catalysed reaction is di-trans,octa-cis-undecaprenyl diphosphate + H2O = di-trans,octa-cis-undecaprenyl phosphate + phosphate + H(+). Functionally, catalyzes the dephosphorylation of undecaprenyl diphosphate (UPP). Confers resistance to bacitracin. This chain is Undecaprenyl-diphosphatase, found in Parvibaculum lavamentivorans (strain DS-1 / DSM 13023 / NCIMB 13966).